The chain runs to 354 residues: Uroporphyrinogen decarboxylase (354 aa).

Substrate contacts are provided by residues 27–31 (RQAGR), aspartate 77, tyrosine 154, threonine 209, and histidine 327.

This sequence belongs to the uroporphyrinogen decarboxylase family. In terms of assembly, homodimer.

It is found in the cytoplasm. The catalysed reaction is uroporphyrinogen III + 4 H(+) = coproporphyrinogen III + 4 CO2. Its pathway is porphyrin-containing compound metabolism; protoporphyrin-IX biosynthesis; coproporphyrinogen-III from 5-aminolevulinate: step 4/4. Catalyzes the decarboxylation of four acetate groups of uroporphyrinogen-III to yield coproporphyrinogen-III. The sequence is that of Uroporphyrinogen decarboxylase from Serratia proteamaculans (strain 568).